Reading from the N-terminus, the 75-residue chain is U6-lycotoxin-Ls1c (75 aa).

Residues M1–A21 form the signal peptide. Positions E22–R25 are excised as a propeptide. 4 disulfide bridges follow: C27/C42, C34/C47, C41/C65, and C49/C63.

It belongs to the neurotoxin 19 (CSTX) family. 06 (U6-Lctx) subfamily. As to expression, expressed by the venom gland.

The protein localises to the secreted. The sequence is that of U6-lycotoxin-Ls1c from Lycosa singoriensis (Wolf spider).